A 614-amino-acid chain; its full sequence is Vitamin B12 transporter BtuB (614 aa).

The first 20 residues, 1-20, serve as a signal peptide directing secretion; it reads MIKKASLLTACSVTAFSAWA. The TonB box signature appears at 26–33; it reads DTLVVTAN. The TBDR plug domain occupies 38-152; sequence PRSTVLAPTT…IGGVVNIITT (115 aa). Cyanocob(III)alamin-binding positions include L83, S85, N92, and 110-111; that span reads VS. Residues 155–614 enclose the TBDR beta-barrel domain; sequence EPGTEISAGW…EYTLSGSYTF (460 aa). 3 beta stranded membrane-spanning segments follow: residues 158–165, 169–178, and 184–195; these read TEISAGWG, YQNYDVSTQQ, and TRVTLLGDYAHT. Ca(2+) contacts are provided by D199, Q211, D213, and D215. Transmembrane regions (beta stranded) follow at residues 217–227 and 232–248; these read FLSKTLYGALE and DAWS…NRTN. Ca(2+)-binding residues include Y249 and D250. A cyanocob(III)alamin-binding site is contributed by A251. D261 serves as a coordination point for Ca(2+). The next 14 beta stranded transmembrane spans lie at 263–277, 279–296, 309–325, 328–337, 353–369, 371–381, 385–400, 403–417, 434–443, 449–458, 473–490, 494–509, 517–529, and 535–550; these read RKLY…LRYN, ELIK…KDYN, TLDE…NNVI, HGSIGAGVDW, YDQR…QQVG, FTFEGAARNDD, FGRH…WEFI, YRFI…KAPN, KSKQWEGAFE, VNWRISGYRN, YYNE…TANF, PLTH…ARNA, RRAK…QLDW, and DWGI…YDKD. T309 is a cyanocob(III)alamin binding site. R517 serves as a coordination point for cyanocob(III)alamin. Residue Y551 coordinates cyanocob(III)alamin. Beta stranded transmembrane passes span 558–572, 585–596, and 602–614; these read TVKM…LAVA, IANLFDKDYETV, and AGRE…SYTF. The short motif at 597–614 is the TonB C-terminal box element; the sequence is YGYQTAGREYTLSGSYTF.

It belongs to the TonB-dependent receptor family. BtuB (TC 1.B.14.3.1) subfamily.

It is found in the cell outer membrane. Involved in the active translocation of vitamin B12 (cyanocobalamin) across the outer membrane to the periplasmic space. It derives its energy for transport by interacting with the trans-periplasmic membrane protein TonB. This chain is Vitamin B12 transporter BtuB, found in Escherichia coli O139:H28 (strain E24377A / ETEC).